Here is a 309-residue protein sequence, read N- to C-terminus: Movement protein (309 aa).

Residues 245-273 form a disordered region; that stretch reads HLSLNESKTLPSTSTTEAEGSERRIHIGA. Residues 246-262 are compositionally biased toward polar residues; that stretch reads LSLNESKTLPSTSTTEA.

It is found in the host cell junction. It localises to the host plasmodesma. Its function is as follows. Transports viral genome to neighboring plant cells directly through plasmosdesmata, without any budding. The movement protein allows efficient cell to cell propagation, by bypassing the host cell wall barrier. Acts by forming a tubular structure at the host plasmodesmata, enlarging it enough to allow free passage of virion capsids. In Solanum lycopersicum (Tomato), this protein is Movement protein.